The primary structure comprises 394 residues: Aspergillopepsin-1 (394 aa).

The signal sequence occupies residues 1–20 (MVVFSKTAALVLGLSTAVSA). A propeptide spans 21 to 69 (APAPTRKGFTINQIARPANKTRTVNLPGLYARSLAKFGGTVPQSVKEAA) (activation peptide). The 307-residue stretch at 85–391 (YLTPVTVGKS…NSEGPKLGFA (307 aa)) folds into the Peptidase A1 domain. Catalysis depends on residues aspartate 101 and aspartate 283. An intrachain disulfide couples cysteine 319 to cysteine 354.

Belongs to the peptidase A1 family.

It localises to the secreted. The enzyme catalyses Hydrolysis of proteins with broad specificity. Generally favors hydrophobic residues in P1 and P1', but also accepts Lys in P1, which leads to activation of trypsinogen. Does not clot milk.. Its function is as follows. Secreted aspartic endopeptidase that allows assimilation of proteinaceous substrates. The scissile peptide bond is attacked by a nucleophilic water molecule activated by two aspartic residues in the active site. Shows a broad primary substrate specificity. Favors hydrophobic residues at the P1 and P1' positions, but also accepts a lysine residue in the P1 position, leading to the activation of trypsinogen and chymotrypsinogen A. In Aspergillus niger, this protein is Aspergillopepsin-1.